Consider the following 51-residue polypeptide: MARYRCCRSQSQSRCCRRRQRCHRRRRRCCQTRRRAMRCCRRRYRLRCRRH.

It belongs to the protamine P1 family. As to quaternary structure, cross-linked by interchain disulfide bonds around the DNA-helix. As to expression, testis.

The protein localises to the nucleus. The protein resides in the chromosome. Functionally, protamines substitute for histones in the chromatin of sperm during the haploid phase of spermatogenesis. They compact sperm DNA into a highly condensed, stable and inactive complex. In Pongo pygmaeus (Bornean orangutan), this protein is Sperm protamine P1 (PRM1).